A 559-amino-acid polypeptide reads, in one-letter code: Glutamine--tRNA ligase (559 aa).

Residues 36 to 46 carry the 'HIGH' region motif; it reads PEPNGYLHLGH. ATP contacts are provided by residues 37-39 and 43-49; these read EPN and HLGHAKS. 2 residues coordinate L-glutamine: Asp69 and Tyr214. Residues Thr233, 263 to 264, and 271 to 273 contribute to the ATP site; these read RL and LSK. The 'KMSKS' region motif lies at 270–274; it reads LLSKR.

It belongs to the class-I aminoacyl-tRNA synthetase family. As to quaternary structure, monomer.

It is found in the cytoplasm. The catalysed reaction is tRNA(Gln) + L-glutamine + ATP = L-glutaminyl-tRNA(Gln) + AMP + diphosphate. This chain is Glutamine--tRNA ligase, found in Nitrobacter winogradskyi (strain ATCC 25391 / DSM 10237 / CIP 104748 / NCIMB 11846 / Nb-255).